Here is a 172-residue protein sequence, read N- to C-terminus: Acetolactate synthase small subunit (172 aa).

One can recognise an ACT domain in the interval 4-78 (TLSVLVEDEA…NVIKVQDITE (75 aa)).

The protein belongs to the acetolactate synthase small subunit family. As to quaternary structure, dimer of large and small chains.

It catalyses the reaction 2 pyruvate + H(+) = (2S)-2-acetolactate + CO2. It functions in the pathway amino-acid biosynthesis; L-isoleucine biosynthesis; L-isoleucine from 2-oxobutanoate: step 1/4. Its pathway is amino-acid biosynthesis; L-valine biosynthesis; L-valine from pyruvate: step 1/4. The polypeptide is Acetolactate synthase small subunit (ilvH) (Synechocystis sp. (strain ATCC 27184 / PCC 6803 / Kazusa)).